A 195-amino-acid polypeptide reads, in one-letter code: 3-isopropylmalate dehydratase small subunit (195 aa).

Belongs to the LeuD family. LeuD type 1 subfamily. As to quaternary structure, heterodimer of LeuC and LeuD.

It catalyses the reaction (2R,3S)-3-isopropylmalate = (2S)-2-isopropylmalate. Its pathway is amino-acid biosynthesis; L-leucine biosynthesis; L-leucine from 3-methyl-2-oxobutanoate: step 2/4. Catalyzes the isomerization between 2-isopropylmalate and 3-isopropylmalate, via the formation of 2-isopropylmaleate. This chain is 3-isopropylmalate dehydratase small subunit, found in Thermobifida fusca (strain YX).